A 508-amino-acid polypeptide reads, in one-letter code: Monocarboxylate transporter 9 (508 aa).

The next 6 helical transmembrane spans lie at 13–33, 53–73, 80–100, 102–122, 137–157, and 164–184; these read WVIV…PLAV, WVGS…SLFV, PVTI…SLAP, IYFL…LLYT, GLAL…YAAL, and FYGL…ILAC. The tract at residues 242–263 is disordered; that stretch reads GDWGRETSLPKNPTGAAHTKEP. Transmembrane regions (helical) follow at residues 303–323, 341–361, 370–390, 396–416, 431–451, and 460–480; these read VFSA…PPSL, IPLI…LGIL, LYLY…IPLA, LAIL…FPYV, GILM…VGWF, and IAFY…LLAI.

It belongs to the major facilitator superfamily. Monocarboxylate porter (TC 2.A.1.13) family. Expressed in the liver and kidneys. In the liver localizes on the sinusoidal membrane of the hepatocytes.

The protein localises to the cell membrane. The catalysed reaction is creatine(in) = creatine(out). It carries out the reaction (R)-carnitine(in) = (R)-carnitine(out). In terms of biological role, extracellular pH-and Na(+)-sensitive low-affinity creatine transporter. Also functions as a pH-independent carnitine efflux transporter. In Rattus norvegicus (Rat), this protein is Monocarboxylate transporter 9 (Slc16a9).